The chain runs to 1163 residues: Reticulon-4 (1163 aa).

Met-1 carries the post-translational modification N-acetylmethionine. Disordered regions lie at residues 1–184 and 244–270; these read MEDI…AASE and SAVS…RATN. The Cytoplasmic segment spans residues 1–989; sequence MEDIDQSSLV…LYWRDIKKTG (989 aa). A phosphoserine mark is found at Ser-7 and Ser-16. The segment covering 7–16 has biased composition (low complexity); the sequence is SSLVSSSTDS. Over residues 31–55 the composition is skewed to acidic residues; it reads EPEDEEDEEEEEDEEEDDEDLEELE. The span at 62–79 shows a compositional bias: low complexity; it reads AAGLSAAAVPPAAAAPLL. The span at 87–101 shows a compositional bias: pro residues; that stretch reads PPAPRGPLPAAPPAA. Ser-107 is modified (phosphoserine). Pro residues predominate over residues 138–147; sequence ARPPPPPPAG. 3 positions are modified to phosphoserine: Ser-149, Ser-169, and Ser-171. Phosphoserine is present on residues Ser-329, Ser-333, and Ser-343. Thr-347 carries the phosphothreonine modification. Residues 406 to 423 show a composition bias toward basic and acidic residues; it reads DSLEQKSLGKDSEGRNED. Disordered stretches follow at residues 406–437 and 454–474; these read DSLE…KDSS and TANT…DEKK. Ser-425 bears the Phosphoserine mark. The residue at position 429 (Thr-429) is a Phosphothreonine. The span at 461-474 shows a compositional bias: basic and acidic residues; that stretch reads LEDHTSENKTDEKK. 5 positions are modified to phosphoserine: Ser-488, Ser-689, Ser-726, Ser-766, and Ser-830. Phosphothreonine is present on Thr-832. Residues Ser-855, Ser-922, and Ser-962 each carry the phosphoserine modification. The region spanning 976–1163 is the Reticulon domain; sequence VVDLLYWRDI…KIPGLKRKAD (188 aa). The helical transmembrane segment at 990-1010 threads the bilayer; it reads VVFGASLFLLLSLTVFSIVSV. Topologically, residues 1011–1104 are lumenal; the sequence is TAYIALALLS…LMWVFTYVGA (94 aa). Residue Lys-1075 is modified to N6-acetyllysine. Residues 1105–1125 form a helical membrane-spanning segment; the sequence is LFNGLTLLILALISLFSIPVI. Residues 1126–1163 are Cytoplasmic-facing; it reads YERHQVQIDHYLGLANKSVKDAMAKIQAKIPGLKRKAD.

In terms of assembly, binds to RTN4R. Interacts with ATL1. Interacts with TMEM170A. Interacts with RTN4IP1. As to quaternary structure, interacts in trans with CNTNAP1. Interacts with REEP5. Interacts with synaptic plasticity regulator PANTS; the interaction results in enhanced RTN4-mediated inhibition of AMPA receptor clustering. Interacts with GPR50. Homodimer. Interacts with BAD/Bcl-xl and BCL2. Interact with RTN3. Interacts with NGBR. Interacts with SPTLC1. Interacts with GRAMD4. Interacts with CDH5. Interacts with BACE1 and BACE2. Interacts with REEP5. Interacts with RETREG3. In terms of assembly, interacts with BACE1 and BACE2. Interacts with TMEM33. As to expression, isoforms A, B and C are present in optic nerve, spinal cord and cerebral cortex. Isoforms A and B are present in dorsal root ganglion, sciatic nerve and PC12 cells after longer exposure. Isoforms B and C are detected in kidney, cartilage, skin, lung and spleen. Isoform C is expressed at high level in skeletal muscle. In adult animals isoform A is expressed mainly in the nervous system.

The protein localises to the endoplasmic reticulum membrane. Its subcellular location is the cell membrane. The protein resides in the synapse. It is found in the cell junction. Required to induce the formation and stabilization of endoplasmic reticulum (ER) tubules. They regulate membrane morphogenesis in the ER by promoting tubular ER production. They influence nuclear envelope expansion, nuclear pore complex formation and proper localization of inner nuclear membrane proteins. However each isoform have specific functions mainly depending on their tissue expression specificities. Its function is as follows. Developmental neurite growth regulatory factor with a role as a negative regulator of axon-axon adhesion and growth, and as a facilitator of neurite branching. Regulates neurite fasciculation, branching and extension in the developing nervous system. Involved in down-regulation of growth, stabilization of wiring and restriction of plasticity in the adult CNS. Regulates the radial migration of cortical neurons via an RTN4R-LINGO1 containing receptor complex. Acts as a negative regulator of central nervous system angiogenesis. Inhibits spreading, migration and sprouting of primary brain microvascular endothelial cells (MVECs). Also induces the retraction of MVECs lamellipodia and filopodia in a ROCK pathway-dependent manner. Functionally, mainly function in endothelial cells and vascular smooth muscle cells, is also involved in immune system regulation. Modulator of vascular remodeling, promotes the migration of endothelial cells but inhibits the migration of vascular smooth muscle cells. Regulates endothelial sphingolipid biosynthesis with direct effects on vascular function and blood pressure. Inhibits serine palmitoyltransferase, SPTLC1, the rate-limiting enzyme of the novo sphingolipid biosynthetic pathway, thereby controlling production of endothelial sphingosine-1-phosphate (S1P). Required to promote macrophage homing and functions such as cytokine/chemokine gene expression involved in angiogenesis, arteriogenesis and tissue repair. Mediates ICAM1 induced transendothelial migration of leukocytes such as monocytes and neutrophils and acute inflammation. Necessary for immune responses triggered by nucleic acid sensing TLRs, such as TLR9, is required for proper TLR9 location to endolysosomes. Also involved in immune response to LPS. Plays a role in liver regeneration through the modulation of hepatocytes proliferation. Reduces the anti-apoptotic activity of Bcl-xl and Bcl-2. This is likely consecutive to their change in subcellular location, from the mitochondria to the endoplasmic reticulum, after binding and sequestration. With isoform C, inhibits BACE1 activity and amyloid precursor protein processing. In terms of biological role, regulates cardiomyocyte apoptosis upon hypoxic conditions. With isoform B, inhibits BACE1 activity and amyloid precursor protein processing. The sequence is that of Reticulon-4 (Rtn4) from Rattus norvegicus (Rat).